We begin with the raw amino-acid sequence, 466 residues long: MIKPRTPPGVLELLPREQIAFQRMLDVIRRNYERFGFLPVETPVFELSDVLLTKSGGETERQVYFVQSTGTLANAAESGATRLPELALRFDLTVPLARYVAEYEHVLAFPFRRYQMQRVYRGERAQRGRFREFYQCDIDVIGKQTLSIRYDAEVLAVIHAVFSELGIGDFQVQLNNRKVLRGFLESQGVRDGDLQLAVLREVDKLDKRGVLDVRDTLIGQGFGIPAAQVENILTFVATRSTSHADALVRLDALIEDSGPEAHEMLRQGVAELREVLTLVNVLGVPEHAYRLNFSIARGLDYYTGTVYETSLINHPQIGSICSGGRYENLANHYTQSKLPGVGISIGLTRLFWQLRDAGVMDGIAESSVQAMVVLMDEATLDDALDIARCLRIGGINTEVQMEAKKVSKQFQYASRAGIRFVVLAGDDERARGVVAVKDLTREQQFEIPREELASTLQVELEQAKVM.

Belongs to the class-II aminoacyl-tRNA synthetase family. In terms of assembly, homodimer.

Its subcellular location is the cytoplasm. The enzyme catalyses tRNA(His) + L-histidine + ATP = L-histidyl-tRNA(His) + AMP + diphosphate + H(+). The polypeptide is Histidine--tRNA ligase (hisS) (Xylella fastidiosa (strain 9a5c)).